The primary structure comprises 318 residues: Formimidoylglutamase (318 aa).

Residues His124, Asp153, His155, Asp157, Cys241, and Asp243 each contribute to the Mn(2+) site.

Belongs to the arginase family. The cofactor is Mn(2+).

The enzyme catalyses N-formimidoyl-L-glutamate + H2O = formamide + L-glutamate. It participates in amino-acid degradation; L-histidine degradation into L-glutamate; L-glutamate from N-formimidoyl-L-glutamate (hydrolase route): step 1/1. Catalyzes the conversion of N-formimidoyl-L-glutamate to L-glutamate and formamide. In Fusobacterium nucleatum subsp. nucleatum (strain ATCC 25586 / DSM 15643 / BCRC 10681 / CIP 101130 / JCM 8532 / KCTC 2640 / LMG 13131 / VPI 4355), this protein is Formimidoylglutamase.